We begin with the raw amino-acid sequence, 208 residues long: ATP-dependent Clp protease proteolytic subunit (208 aa).

Residue Ser-105 is the Nucleophile of the active site. The active site involves His-130.

It belongs to the peptidase S14 family. In terms of assembly, fourteen ClpP subunits assemble into 2 heptameric rings which stack back to back to give a disk-like structure with a central cavity, resembling the structure of eukaryotic proteasomes.

Its subcellular location is the cytoplasm. The catalysed reaction is Hydrolysis of proteins to small peptides in the presence of ATP and magnesium. alpha-casein is the usual test substrate. In the absence of ATP, only oligopeptides shorter than five residues are hydrolyzed (such as succinyl-Leu-Tyr-|-NHMec, and Leu-Tyr-Leu-|-Tyr-Trp, in which cleavage of the -Tyr-|-Leu- and -Tyr-|-Trp bonds also occurs).. Its function is as follows. Cleaves peptides in various proteins in a process that requires ATP hydrolysis. Has a chymotrypsin-like activity. Plays a major role in the degradation of misfolded proteins. This chain is ATP-dependent Clp protease proteolytic subunit, found in Xanthomonas axonopodis pv. citri (strain 306).